Here is a 796-residue protein sequence, read N- to C-terminus: Histone acetyltransferase KAT2B (796 aa).

Disordered regions lie at residues 1 to 32, 77 to 97, and 371 to 408; these read MSES…TECS, WKSQ…AEQP, and AGGG…DSKR. The span at 10–24 shows a compositional bias: low complexity; that stretch reads GSPAVGAAGSAPAAP. The segment covering 81–94 has biased composition (pro residues); that stretch reads NPPPTPPPPTPPRA. Positions 392–408 are enriched in basic and acidic residues; that stretch reads GEKRKPAEPLSHEDSKR. The N-acetyltransferase domain occupies 469–617; sequence LNQKPNKKIL…GATLMGCELN (149 aa). Catalysis depends on glutamate 536, which acts as the Proton donor/acceptor. Residues 540-542, 547-553, and 578-581 each bind acetyl-CoA; these read CAV, QVKGYGT, and YAIG. Positions 687–791 constitute a Bromo domain; sequence KDPDQLYSTL…KFFYTKIKEA (105 aa).

This sequence belongs to the acetyltransferase family. GCN5 subfamily.

The protein resides in the nucleus. It localises to the cytoplasm. Its subcellular location is the cytoskeleton. The protein localises to the microtubule organizing center. It is found in the centrosome. It catalyses the reaction L-lysyl-[histone] + acetyl-CoA = N(6)-acetyl-L-lysyl-[histone] + CoA + H(+). The catalysed reaction is L-lysyl-[protein] + acetyl-CoA = N(6)-acetyl-L-lysyl-[protein] + CoA + H(+). The enzyme catalyses spermidine + acetyl-CoA = N(8)-acetylspermidine + CoA + H(+). Functions as a histone acetyltransferase (HAT) to promote transcriptional activation. Has significant histone acetyltransferase activity with core histones (H3 and H4), and also with nucleosome core particles. Has a a strong preference for acetylation of H3 at 'Lys-9' (H3K9ac). Also acetylates non-histone proteins. Involved in heart and limb development by mediating acetylation of tbx5. Also acetylates spermidine. Together with kat2a, required for growth and differentiation of craniofacial cartilage and bone by regulating acetylation of histone H3 at 'Lys-9' (H3K9ac). The chain is Histone acetyltransferase KAT2B from Danio rerio (Zebrafish).